The sequence spans 485 residues: Homospermidine synthase (485 aa).

This sequence belongs to the saccharopine dehydrogenase family. Requires NAD(+) as cofactor.

It catalyses the reaction 2 putrescine = sym-homospermidine + NH4(+). It carries out the reaction putrescine + spermidine = sym-homospermidine + propane-1,3-diamine. Involved in the NAD(+)-dependent synthesis of the polyamine homospermidine from putrescine. The chain is Homospermidine synthase (hss) from Mesorhizobium japonicum (strain LMG 29417 / CECT 9101 / MAFF 303099) (Mesorhizobium loti (strain MAFF 303099)).